The chain runs to 145 residues: Ribosomal RNA large subunit methyltransferase H (145 aa).

Residues Leu62, Gly94, and 113–118 contribute to the S-adenosyl-L-methionine site; that span reads LGQLTL.

This sequence belongs to the RNA methyltransferase RlmH family. Homodimer.

It localises to the cytoplasm. The enzyme catalyses pseudouridine(1915) in 23S rRNA + S-adenosyl-L-methionine = N(3)-methylpseudouridine(1915) in 23S rRNA + S-adenosyl-L-homocysteine + H(+). Its function is as follows. Specifically methylates the pseudouridine at position 1915 (m3Psi1915) in 23S rRNA. The protein is Ribosomal RNA large subunit methyltransferase H of Deinococcus deserti (strain DSM 17065 / CIP 109153 / LMG 22923 / VCD115).